A 95-amino-acid polypeptide reads, in one-letter code: Integration host factor subunit beta (95 aa).

The segment at 56–76 is disordered; it reads RAPRTGRNPKTGTSVELDGKY.

It belongs to the bacterial histone-like protein family. In terms of assembly, heterodimer of an alpha and a beta chain.

This protein is one of the two subunits of integration host factor, a specific DNA-binding protein that functions in genetic recombination as well as in transcriptional and translational control. The polypeptide is Integration host factor subunit beta (Shewanella denitrificans (strain OS217 / ATCC BAA-1090 / DSM 15013)).